Here is a 510-residue protein sequence, read N- to C-terminus: NAD(P)H-quinone oxidoreductase subunit 2 B, chloroplastic (510 aa).

Helical transmembrane passes span 24 to 44 (LLLF…GLIL), 57 to 77 (IPWL…ALLF), 99 to 119 (IFQF…VEYI), 124 to 144 (MAIT…MFLC), 150 to 170 (ITIF…SGYT), 183 to 203 (YLLM…WLYG), 229 to 249 (ISIA…PAPF), 295 to 315 (WHLL…LIAI), 323 to 343 (MLAY…IVGD), 354 to 374 (YMLF…LFGL), 395 to 415 (ALSS…AGFF), 418 to 438 (LHLF…IGLL), and 484 to 504 (MIVC…IIAI).

Belongs to the complex I subunit 2 family. NDH is composed of at least 16 different subunits, 5 of which are encoded in the nucleus.

It is found in the plastid. It localises to the chloroplast thylakoid membrane. It catalyses the reaction a plastoquinone + NADH + (n+1) H(+)(in) = a plastoquinol + NAD(+) + n H(+)(out). The catalysed reaction is a plastoquinone + NADPH + (n+1) H(+)(in) = a plastoquinol + NADP(+) + n H(+)(out). In terms of biological role, NDH shuttles electrons from NAD(P)H:plastoquinone, via FMN and iron-sulfur (Fe-S) centers, to quinones in the photosynthetic chain and possibly in a chloroplast respiratory chain. The immediate electron acceptor for the enzyme in this species is believed to be plastoquinone. Couples the redox reaction to proton translocation, and thus conserves the redox energy in a proton gradient. The sequence is that of NAD(P)H-quinone oxidoreductase subunit 2 B, chloroplastic from Drimys granadensis.